We begin with the raw amino-acid sequence, 290 residues long: Sodium/potassium-transporting ATPase subunit beta-2 (290 aa).

Residues 1-39 (MVIQKEKKSCGQVVEEWKEFVWNPRTHQFMGRTGTSWAF) lie on the Cytoplasmic side of the membrane. Residues 40 to 67 (ILLFYLVFYGFLTAMFSLTMWVMLQTVS) traverse the membrane as a helical; Signal-anchor for type II membrane protein segment. The Extracellular segment spans residues 68 to 290 (DHTPKYQDRL…VAFKLRINKT (223 aa)). Residues asparagine 96 and asparagine 118 are each glycosylated (N-linked (GlcNAc...) asparagine). Cysteine 129 and cysteine 150 are disulfide-bonded. The N-linked (GlcNAc...) asparagine glycan is linked to asparagine 153. A disulfide bridge connects residues cysteine 160 and cysteine 177. Residues asparagine 193, asparagine 197, asparagine 220, and asparagine 238 are each glycosylated (N-linked (GlcNAc...) asparagine). Residues 193-290 (NQSMNVTCVG…VAFKLRINKT (98 aa)) are immunoglobulin-like. Cysteine 200 and cysteine 261 are oxidised to a cystine.

This sequence belongs to the X(+)/potassium ATPases subunit beta family. As to quaternary structure, the sodium/potassium-transporting ATPase is composed of a catalytic alpha subunit, an auxiliary non-catalytic beta subunit and an additional regulatory subunit. Interacts with isoform 2 of BSG.

It is found in the cell membrane. Its function is as follows. This is the non-catalytic component of the active enzyme, which catalyzes the hydrolysis of ATP coupled with the exchange of Na(+) and K(+) ions across the plasma membrane. The exact function of the beta-2 subunit is not known. In terms of biological role, mediates cell adhesion of neurons and astrocytes, and promotes neurite outgrowth. In Mus musculus (Mouse), this protein is Sodium/potassium-transporting ATPase subunit beta-2 (Atp1b2).